The chain runs to 786 residues: Endonuclease MutS2 (786 aa).

ATP is bound at residue 332-339 (GPNTGGKT). Residues 711–786 (IDLRGMDSEE…GTGVTVVILK (76 aa)) form the Smr domain.

It belongs to the DNA mismatch repair MutS family. MutS2 subfamily. As to quaternary structure, homodimer. Binds to stalled ribosomes, contacting rRNA.

Its function is as follows. Endonuclease that is involved in the suppression of homologous recombination and thus may have a key role in the control of bacterial genetic diversity. Functionally, acts as a ribosome collision sensor, splitting the ribosome into its 2 subunits. Detects stalled/collided 70S ribosomes which it binds and splits by an ATP-hydrolysis driven conformational change. Acts upstream of the ribosome quality control system (RQC), a ribosome-associated complex that mediates the extraction of incompletely synthesized nascent chains from stalled ribosomes and their subsequent degradation. Probably generates substrates for RQC. In Clostridium perfringens (strain 13 / Type A), this protein is Endonuclease MutS2.